We begin with the raw amino-acid sequence, 176 residues long: Protein OPG163 (176 aa).

The signal sequence occupies residues 1–14; that stretch reads MDAAFVITPMGVLT.

The protein belongs to the orthopoxvirus OPG163 family.

It localises to the host endosome. In terms of biological role, mildly affects the expression of MHC class II molecules on the surface of host antigen presenting cells (APCs). The sequence is that of Protein OPG163 (OPG163) from Vaccinia virus (strain Western Reserve) (VACV).